A 179-amino-acid polypeptide reads, in one-letter code: Ubiquitin-conjugating enzyme E2 C (179 aa).

Residues 1–31 (MASQNVDPAAASSVASRKGQESGTSAARGSV) are disordered. Residues 30–179 (SVGKRLQQEL…YQKQVREKEI (150 aa)) form the UBC core domain. Cys-114 acts as the Glycyl thioester intermediate in catalysis.

This sequence belongs to the ubiquitin-conjugating enzyme family. Component of the APC/C complex. In terms of processing, autoubiquitinated by the APC/C complex, leading to its degradation by the proteasome.

The catalysed reaction is S-ubiquitinyl-[E1 ubiquitin-activating enzyme]-L-cysteine + [E2 ubiquitin-conjugating enzyme]-L-cysteine = [E1 ubiquitin-activating enzyme]-L-cysteine + S-ubiquitinyl-[E2 ubiquitin-conjugating enzyme]-L-cysteine.. It catalyses the reaction S-ubiquitinyl-[E1 ubiquitin-activating enzyme]-L-cysteine + [acceptor protein]-L-lysine = [E1 ubiquitin-activating enzyme]-L-cysteine + N(6)-monoubiquitinyl-[acceptor protein]-L-lysine.. Its pathway is protein modification; protein ubiquitination. In terms of biological role, catalyzes the covalent attachment of ubiquitin to other proteins. Acts as an essential factor of the anaphase promoting complex/cyclosome (APC/C), a cell cycle-regulated ubiquitin ligase that controls progression through mitosis. Acts by initiating 'Lys-11'-linked polyubiquitin chains on APC/C substrates, leading to the degradation of APC/C substrates by the proteasome and promoting mitotic exit. This chain is Ubiquitin-conjugating enzyme E2 C (ube2c), found in Xenopus laevis (African clawed frog).